Reading from the N-terminus, the 176-residue chain is Large ribosomal subunit protein bL17 (176 aa).

The disordered stretch occupies residues 124–176 (AAPKAARQDRSKRVKGSRKTEASAAKAAPAAQAAPELPAESDAPAAEAAPTEE). Residues 145 to 176 (ASAAKAAPAAQAAPELPAESDAPAAEAAPTEE) show a composition bias toward low complexity.

The protein belongs to the bacterial ribosomal protein bL17 family. In terms of assembly, part of the 50S ribosomal subunit. Contacts protein L32.

This is Large ribosomal subunit protein bL17 from Chlorobium phaeovibrioides (strain DSM 265 / 1930) (Prosthecochloris vibrioformis (strain DSM 265)).